A 312-amino-acid polypeptide reads, in one-letter code: Olfactory receptor 5P4 (312 aa).

Residues 1 to 25 (METENDTMVTEFIILGLTDSATLRA) are Extracellular-facing. An N-linked (GlcNAc...) asparagine glycan is attached at Asn-5. Residues 26 to 46 (ILFVFFLPVYIVTVVGNISII) form a helical membrane-spanning segment. The Cytoplasmic portion of the chain corresponds to 47–54 (LLIRSSPQ). A helical membrane pass occupies residues 55 to 75 (LHTPMYLFLSHLAFVDIGYST). The Extracellular segment spans residues 76–99 (SVTPIMLISFLREETTIPLAGCAA). A disulfide bridge links Cys-97 with Cys-189. A helical membrane pass occupies residues 100-120 (QLGSDVAFGTTECFLLATMAY). Residues 121-133 (DRYVAICSPLLYS) are Cytoplasmic-facing. A helical membrane pass occupies residues 134–154 (TQMSPAICCFLLGASYLGGCM). Topologically, residues 155 to 196 (NASSFTGCFVNLNFCGPNKVNHFFCDLFPLVKLSCGHAYIAE) are extracellular. A helical membrane pass occupies residues 197 to 217 (ISPSISSASVLVSTLSTIIVS). Residues 218-237 (YIYILHSILRMRSAEGRNKA) lie on the Cytoplasmic side of the membrane. A helical membrane pass occupies residues 238–258 (FSTCTSHLTAVTLFYGTVLFV). The Extracellular portion of the chain corresponds to 259-271 (YVMPKSSYSADQV). The helical transmembrane segment at 272 to 292 (KVASVVYTVVIPMLNPLIYSL) threads the bilayer. Residues 293-312 (RNKEVKEAMKKLMARTHWFP) lie on the Cytoplasmic side of the membrane.

It belongs to the G-protein coupled receptor 1 family.

It is found in the cell membrane. Functionally, potential odorant receptor. The chain is Olfactory receptor 5P4 from Mus musculus (Mouse).